A 256-amino-acid chain; its full sequence is MAVGKNKRLSKGKKGIKKKVVDPFTRKDWYDIKAPSIFEKRNVGKTLVNRSSGLKNANDSLKGRIVEISLADLNNDEEQAFRKIKLRIDEVQGKNCLTNFHGMSFSSDKLRSLVRKWQTLIEAHVDVKTTDGYLLRLFAIGFTKRRPTQVRKTTYAQSSQIRQIRQKMFEIMTREASSCDLKELVQKFIPEAIGREIEKAARGIYPLQNVFVHKAKILKAPKFDMSKLLELHGESTDETGTRVVKDFKEPEILESV.

At A2 the chain carries N-acetylalanine; partial.

This sequence belongs to the eukaryotic ribosomal protein eS1 family. In terms of assembly, component of the small ribosomal subunit. Mature ribosomes consist of a small (40S) and a large (60S) subunit. The 40S subunit contains about 33 different proteins and 1 molecule of RNA (18S). The 60S subunit contains about 49 different proteins and 3 molecules of RNA (25S, 5.8S and 5S).

Its subcellular location is the cytoplasm. The chain is Small ribosomal subunit protein eS1 from Postia placenta (strain ATCC 44394 / Madison 698-R) (Brown rot fungus).